The chain runs to 1191 residues: Roquin-2 (1191 aa).

Residues Cys-14, Cys-17, Cys-33, His-35, Cys-38, Cys-50, and Asp-53 each contribute to the Zn(2+) site. The RING-type; degenerate zinc finger occupies 14–54 (CPICYNEFDENVHKPISLGCSHTVCKTCLNKLHRKACPFDQ). The HEPN-N stretch occupies residues 91–170 (ENKHYEVAKK…RTVTELILQH (80 aa)). Positions 171–325 (QNPQQLSANL…SIIDKLQSPE (155 aa)) are ROQ. The HEPN-C stretch occupies residues 326–396 (SFAKSVQELT…GLVDFIQNYS (71 aa)). The segment at 410–438 (KYKTSMCRDLRQQGGCPRGTNCTFAHSQE) adopts a C3H1-type zinc-finger fold. 2 disordered regions span residues 528-576 (GANG…NSVP) and 644-680 (ESSL…PQPY). The span at 530-546 (NGQNAAGPSADSVTENK) shows a compositional bias: polar residues. Ser-549 carries the phosphoserine modification. Polar residues predominate over residues 554 to 576 (PVSNVAATSAGPSNVGTELNSVP). A phosphoserine mark is found at Ser-808, Ser-983, and Ser-1119.

In terms of assembly, interacts with EDC4. Interacts with CCR4-NOT deadenylase complex. Interacts with MAP3K5; the interaction is probably stimulus-dependent. Proteolytically cleaved after Arg-509 and Arg-585 by MALT1 in activated CD4(+) T cells; cleavage at Arg-509 and Arg-585 is critical for promoting RC3H1 degradation in response to T-cell receptor (TCR) stimulation, and hence is necessary for prolonging the stability of a set of mRNAs controlling Th17 cell differentiation. Expressed in spleen, testis, ovary and small intestine.

The protein resides in the cytoplasm. It localises to the P-body. It carries out the reaction S-ubiquitinyl-[E2 ubiquitin-conjugating enzyme]-L-cysteine + [acceptor protein]-L-lysine = [E2 ubiquitin-conjugating enzyme]-L-cysteine + N(6)-ubiquitinyl-[acceptor protein]-L-lysine.. Its pathway is protein modification; protein ubiquitination. With respect to regulation, binding to dsRNA, but not CDE RNA, crosstalks with the E3 ubiquitin ligase activity and may inhibit ubiquitination. In terms of biological role, post-transcriptional repressor of mRNAs containing a conserved stem loop motif, called constitutive decay element (CDE), which is often located in the 3'-UTR, as in HMGXB3, ICOS, IER3, NFKBID, NFKBIZ, PPP1R10, TNF and in many more mRNAs. Binds to CDE and promotes mRNA deadenylation and degradation. This process does not involve miRNAs. In follicular helper T (Tfh) cells, represses of ICOS and TNFRSF4 expression, thus preventing spontaneous Tfh cell differentiation, germinal center B-cell differentiation in the absence of immunization and autoimmunity. In resting or LPS-stimulated macrophages, controls inflammation by suppressing TNF expression. Also recognizes CDE in its own mRNA and in that of paralogous RC3H1, possibly leading to feedback loop regulation. miRNA-binding protein that regulates microRNA homeostasis. Enhances DICER-mediated processing of pre-MIR146a but reduces mature MIR146a levels through an increase of 3' end uridylation. Both inhibits ICOS mRNA expression and they may act together to exert the suppression. Acts as a ubiquitin E3 ligase. Pairs with E2 enzymes UBE2B, UBE2D2, UBE2E2, UBE2E3, UBE2G2, UBE2K and UBE2Q2 and produces polyubiquitin chains. Shows the strongest activity when paired with UBE2N:UBE2V1 or UBE2N:UBE2V2 E2 complexes and generate both short and long polyubiquitin chains. Involved in the ubiquitination of MAP3K5. Able to interact with double-stranded RNA (dsRNA). The polypeptide is Roquin-2 (RC3H2) (Homo sapiens (Human)).